A 503-amino-acid polypeptide reads, in one-letter code: ATP synthase subunit alpha, chloroplastic (503 aa).

Residue 170-177 coordinates ATP; the sequence is GDRQTGKT.

The protein belongs to the ATPase alpha/beta chains family. F-type ATPases have 2 components, CF(1) - the catalytic core - and CF(0) - the membrane proton channel. CF(1) has five subunits: alpha(3), beta(3), gamma(1), delta(1), epsilon(1). CF(0) has four main subunits: a, b, b' and c.

The protein resides in the plastid. It is found in the chloroplast thylakoid membrane. The enzyme catalyses ATP + H2O + 4 H(+)(in) = ADP + phosphate + 5 H(+)(out). Its function is as follows. Produces ATP from ADP in the presence of a proton gradient across the membrane. The alpha chain is a regulatory subunit. In Gracilaria tenuistipitata var. liui (Red alga), this protein is ATP synthase subunit alpha, chloroplastic.